We begin with the raw amino-acid sequence, 389 residues long: Probable dual-specificity RNA methyltransferase RlmN (389 aa).

The active-site Proton acceptor is glutamate 114. Positions glutamine 120–aspartate 358 constitute a Radical SAM core domain. A disulfide bond links cysteine 127 and cysteine 363. [4Fe-4S] cluster-binding residues include cysteine 134, cysteine 138, and cysteine 141. Residues glycine 186–glutamate 187, serine 218, serine 241–histidine 243, and asparagine 319 each bind S-adenosyl-L-methionine. Cysteine 363 serves as the catalytic S-methylcysteine intermediate. Residues threonine 370–lysine 389 form a disordered region. A compositionally biased stretch (basic and acidic residues) spans methionine 371–lysine 389.

The protein belongs to the radical SAM superfamily. RlmN family. Requires [4Fe-4S] cluster as cofactor.

The protein localises to the cytoplasm. The enzyme catalyses adenosine(2503) in 23S rRNA + 2 reduced [2Fe-2S]-[ferredoxin] + 2 S-adenosyl-L-methionine = 2-methyladenosine(2503) in 23S rRNA + 5'-deoxyadenosine + L-methionine + 2 oxidized [2Fe-2S]-[ferredoxin] + S-adenosyl-L-homocysteine. It carries out the reaction adenosine(37) in tRNA + 2 reduced [2Fe-2S]-[ferredoxin] + 2 S-adenosyl-L-methionine = 2-methyladenosine(37) in tRNA + 5'-deoxyadenosine + L-methionine + 2 oxidized [2Fe-2S]-[ferredoxin] + S-adenosyl-L-homocysteine. Specifically methylates position 2 of adenine 2503 in 23S rRNA and position 2 of adenine 37 in tRNAs. The protein is Probable dual-specificity RNA methyltransferase RlmN of Streptococcus thermophilus (strain ATCC BAA-250 / LMG 18311).